Consider the following 167-residue polypeptide: Crossover junction endodeoxyribonuclease RuvC (167 aa).

Catalysis depends on residues Asp8, Glu67, and Asp139. Residues Asp8, Glu67, and Asp139 each coordinate Mg(2+).

Belongs to the RuvC family. As to quaternary structure, homodimer which binds Holliday junction (HJ) DNA. The HJ becomes 2-fold symmetrical on binding to RuvC with unstacked arms; it has a different conformation from HJ DNA in complex with RuvA. In the full resolvosome a probable DNA-RuvA(4)-RuvB(12)-RuvC(2) complex forms which resolves the HJ. Mg(2+) is required as a cofactor.

It localises to the cytoplasm. The catalysed reaction is Endonucleolytic cleavage at a junction such as a reciprocal single-stranded crossover between two homologous DNA duplexes (Holliday junction).. Functionally, the RuvA-RuvB-RuvC complex processes Holliday junction (HJ) DNA during genetic recombination and DNA repair. Endonuclease that resolves HJ intermediates. Cleaves cruciform DNA by making single-stranded nicks across the HJ at symmetrical positions within the homologous arms, yielding a 5'-phosphate and a 3'-hydroxyl group; requires a central core of homology in the junction. The consensus cleavage sequence is 5'-(A/T)TT(C/G)-3'. Cleavage occurs on the 3'-side of the TT dinucleotide at the point of strand exchange. HJ branch migration catalyzed by RuvA-RuvB allows RuvC to scan DNA until it finds its consensus sequence, where it cleaves and resolves the cruciform DNA. The polypeptide is Crossover junction endodeoxyribonuclease RuvC (Halorhodospira halophila (strain DSM 244 / SL1) (Ectothiorhodospira halophila (strain DSM 244 / SL1))).